Consider the following 372-residue polypeptide: E3 ubiquitin-protein ligase RNF34 (372 aa).

The segment at 56–107 (EGPNIVCKACGLSFSVFRKKHVCCDCKKDFCSVCSVLQENLRRCSTCHLLQE) adopts an FYVE-type zinc-finger fold. The region spanning 115 to 134 (LMRLKVKDLRQYLILRNIPT) is the SAP 1 domain. Serine 169 is modified (phosphoserine). A disordered region spans residues 194 to 252 (QGELMDGDQTSRSGVPAQVQSEITSANTEDDDDDDDEDDDDEEENAEDQNPGLSKERVR). Residues 201–220 (DQTSRSGVPAQVQSEITSAN) show a composition bias toward polar residues. Acidic residues predominate over residues 221–240 (TEDDDDDDDEDDDDEEENAE). 2 positions are modified to phosphoserine: serine 254 and serine 256. One can recognise an SAP 2 domain in the interval 264-278 (VEGMSVRQLKEILAR). The RING-type zinc finger occupies 325–360 (CRICMDAVIDCVLLECGHMVTCTKCGKRMSECPICR).

As to quaternary structure, interacts with CASP8 and CASP10. Interacts with p53/TP53; involved in p53/TP53 ubiquitination. Interacts (via RING-type zinc finger) with MDM2; the interaction stabilizes MDM2. Interacts (via RING-type zinc finger) with PPARGC1A. Interacts with NOD1. Autoubiquitinated (in vitro). Post-translationally, proteolytically cleaved by caspases upon induction of apoptosis by TNF.

Its subcellular location is the cell membrane. It localises to the endomembrane system. It is found in the nucleus. The protein resides in the nucleus speckle. The protein localises to the cytoplasm. Its subcellular location is the cytosol. The catalysed reaction is S-ubiquitinyl-[E2 ubiquitin-conjugating enzyme]-L-cysteine + [acceptor protein]-L-lysine = [E2 ubiquitin-conjugating enzyme]-L-cysteine + N(6)-ubiquitinyl-[acceptor protein]-L-lysine.. Its pathway is protein modification; protein ubiquitination. Its function is as follows. E3 ubiquitin-protein ligase that regulates several biological processes through the ubiquitin-mediated proteasomal degradation of various target proteins. Ubiquitinates the caspases CASP8 and CASP10, promoting their proteasomal degradation, to negatively regulate cell death downstream of death domain receptors in the extrinsic pathway of apoptosis. May mediate 'Lys-48'-linked polyubiquitination of RIPK1 and its subsequent proteasomal degradation thereby indirectly regulating the tumor necrosis factor-mediated signaling pathway. Negatively regulates p53/TP53 through its direct ubiquitination and targeting to proteasomal degradation. Indirectly, may also negatively regulate p53/TP53 through ubiquitination and degradation of SFN. Mediates PPARGC1A proteasomal degradation probably through ubiquitination thereby indirectly regulating the metabolism of brown fat cells. Possibly involved in innate immunity, through 'Lys-48'-linked polyubiquitination of NOD1 and its subsequent proteasomal degradation. This is E3 ubiquitin-protein ligase RNF34 (RNF34) from Pongo abelii (Sumatran orangutan).